A 359-amino-acid polypeptide reads, in one-letter code: Fructose-bisphosphate aldolase (359 aa).

A D-glyceraldehyde 3-phosphate-binding site is contributed by Ser50. Asp83 acts as the Proton donor in catalysis. Residues His84, Asp105, Glu142, and His198 each coordinate Zn(2+). Gly199 is a dihydroxyacetone phosphate binding site. His232 provides a ligand contact to Zn(2+). Dihydroxyacetone phosphate-binding positions include Gly233–Ser235 and Asn275–Thr278.

This sequence belongs to the class II fructose-bisphosphate aldolase family. Homodimer. Zn(2+) serves as cofactor.

The enzyme catalyses beta-D-fructose 1,6-bisphosphate = D-glyceraldehyde 3-phosphate + dihydroxyacetone phosphate. It participates in carbohydrate biosynthesis; Calvin cycle. Its pathway is carbohydrate degradation; glycolysis; D-glyceraldehyde 3-phosphate and glycerone phosphate from D-glucose: step 4/4. Its function is as follows. Catalyzes the aldol condensation of dihydroxyacetone phosphate (DHAP or glycerone-phosphate) with glyceraldehyde 3-phosphate (G3P) to form fructose 1,6-bisphosphate (FBP) in gluconeogenesis and the reverse reaction in glycolysis. The sequence is that of Fructose-bisphosphate aldolase (cbbA) from Sinorhizobium medicae (strain WSM419) (Ensifer medicae).